The primary structure comprises 437 residues: 3-phosphoshikimate 1-carboxyvinyltransferase (437 aa).

3-phosphoshikimate is bound by residues lysine 26, serine 27, and arginine 31. Phosphoenolpyruvate is bound at residue lysine 26. 2 residues coordinate phosphoenolpyruvate: glycine 99 and arginine 127. Positions 172, 174, 320, and 347 each coordinate 3-phosphoshikimate. Glutamine 174 is a binding site for phosphoenolpyruvate. Aspartate 320 serves as the catalytic Proton acceptor. Phosphoenolpyruvate contacts are provided by arginine 351 and arginine 392.

Belongs to the EPSP synthase family. Monomer.

Its subcellular location is the cytoplasm. The enzyme catalyses 3-phosphoshikimate + phosphoenolpyruvate = 5-O-(1-carboxyvinyl)-3-phosphoshikimate + phosphate. The protein operates within metabolic intermediate biosynthesis; chorismate biosynthesis; chorismate from D-erythrose 4-phosphate and phosphoenolpyruvate: step 6/7. Catalyzes the transfer of the enolpyruvyl moiety of phosphoenolpyruvate (PEP) to the 5-hydroxyl of shikimate-3-phosphate (S3P) to produce enolpyruvyl shikimate-3-phosphate and inorganic phosphate. In Methylococcus capsulatus (strain ATCC 33009 / NCIMB 11132 / Bath), this protein is 3-phosphoshikimate 1-carboxyvinyltransferase.